Reading from the N-terminus, the 151-residue chain is Secreted RxLR effector protein 30 (151 aa).

The N-terminal stretch at 1 to 19 (MRSSTILIVLGIAILAVNG) is a signal peptide. Residues 38–53 (RLLRSTSTEHETDEER) carry the RxLR-dEER motif.

It belongs to the RxLR effector family.

Its subcellular location is the secreted. The protein localises to the host nucleus. Functionally, effector that acts as a broad suppressor of cell death to interrupt plant immunity. Inhibits cell death induced by cell death-inducing proteins, including the PAMP elicitor INF1 from P.infestans. In Plasmopara viticola (Downy mildew of grapevine), this protein is Secreted RxLR effector protein 30.